The following is a 342-amino-acid chain: Phosphoribosylformylglycinamidine cyclo-ligase (342 aa).

This sequence belongs to the AIR synthase family.

Its subcellular location is the cytoplasm. The catalysed reaction is 2-formamido-N(1)-(5-O-phospho-beta-D-ribosyl)acetamidine + ATP = 5-amino-1-(5-phospho-beta-D-ribosyl)imidazole + ADP + phosphate + H(+). It participates in purine metabolism; IMP biosynthesis via de novo pathway; 5-amino-1-(5-phospho-D-ribosyl)imidazole from N(2)-formyl-N(1)-(5-phospho-D-ribosyl)glycinamide: step 2/2. This Staphylococcus aureus (strain bovine RF122 / ET3-1) protein is Phosphoribosylformylglycinamidine cyclo-ligase.